The following is a 591-amino-acid chain: MAARSELLRPAFGEASPSLGRFVINPHSCSYRWWHMFLIMLVLYSAWASPFELSMEKAASIALVVTDLVVDVFFAIDIALSFFVAYRDTSTGLLITDRRKITMRYLKRPCFALDVASTIPLQIIYQLVTGKRQGLWGLLNLLRLWRLRRVSKLFARVEKDIRFNYLWTRLIKLLCVTLFALHFAACIYLWMAFNYKIKELTWIGSQIHSFEDRSVWFCYTCAVYWSITTLATVGYGDLHATNIGEMLFSIAFMLFNMGLTSYIIGNITNLVVRETSNTFKMRDMVQRVSEFGRMNRLPEAMREQMLASVQLRFRTDEQLQQEMLSELPKAVRSGVMKHMFKSAIESCYLFQGVSDSLIVQLVAEMKAEFFPPKANVILENETSTDCYIIISGEVEALTTLADGTEKHVKRIGPRGMAGEIGVMFSIPQPFTIRSRRLTQVVRISHIHLLQAVRPNTADGYIVFSNFIQYLESLKVQTKDVAFVSDHLWNGNSMVLRRATEVAVDESKEAAHKMLPCKEPKRVVIHEQLPNATSTALHPSPGKLVLLPDSMQELMKLSEKKFGKAVRGILTVEGAEVEDIEVIRDGDHLLFS.

The Cytoplasmic portion of the chain corresponds to 1–32 (MAARSELLRPAFGEASPSLGRFVINPHSCSYR). The helical transmembrane segment at 33 to 53 (WWHMFLIMLVLYSAWASPFEL) threads the bilayer. At 54 to 63 (SMEKAASIAL) the chain is on the extracellular side. The helical transmembrane segment at 64-84 (VVTDLVVDVFFAIDIALSFFV) threads the bilayer. Over 85 to 109 (AYRDTSTGLLITDRRKITMRYLKRP) the chain is Cytoplasmic. A helical transmembrane segment spans residues 110 to 130 (CFALDVASTIPLQIIYQLVTG). Residues 131–137 (KRQGLWG) lie on the Extracellular side of the membrane. The chain crosses the membrane as a helical; Voltage-sensor span at residues 138-158 (LLNLLRLWRLRRVSKLFARVE). Over 159–172 (KDIRFNYLWTRLIK) the chain is Cytoplasmic. Residues 173 to 193 (LLCVTLFALHFAACIYLWMAF) form a helical membrane-spanning segment. Residues 194–220 (NYKIKELTWIGSQIHSFEDRSVWFCYT) are Extracellular-facing. The pore-forming intramembrane region spans 221 to 240 (CAVYWSITTLATVGYGDLHA). Residues 241-246 (TNIGEM) lie on the Extracellular side of the membrane. The chain crosses the membrane as a helical span at residues 247-267 (LFSIAFMLFNMGLTSYIIGNI). The Cytoplasmic portion of the chain corresponds to 268 to 591 (TNLVVRETSN…IRDGDHLLFS (324 aa)). 349 to 469 (LFQGVSDSLI…YIVFSNFIQY (121 aa)) contacts a nucleoside 3',5'-cyclic phosphate. Residues 521 to 591 (RVVIHEQLPN…IRDGDHLLFS (71 aa)) enclose the KHA domain.

It belongs to the potassium channel family. Plant (TC 1.A.1.4) subfamily.

It is found in the membrane. Its function is as follows. Probable inward-rectifying potassium channel. Assuming opened or closed conformations in response to the voltage difference across the membrane, the channel is activated by hyperpolarization. This is Potassium channel KAT4 from Oryza sativa subsp. japonica (Rice).